Reading from the N-terminus, the 166-residue chain is FMN reductase (NADH) RutF (166 aa).

The protein belongs to the non-flavoprotein flavin reductase family. RutF subfamily.

It carries out the reaction FMNH2 + NAD(+) = FMN + NADH + 2 H(+). In terms of biological role, catalyzes the reduction of FMN to FMNH2 which is used to reduce pyrimidine by RutA via the Rut pathway. The protein is FMN reductase (NADH) RutF of Cronobacter sakazakii (strain ATCC BAA-894) (Enterobacter sakazakii).